The primary structure comprises 462 residues: 3-ketoacyl CoA thiolase 1, peroxisomal (462 aa).

The N-terminal 34 residues, 1–34 (MEKAIQRQRVLLEHLQPIRHHTHDHSSSLTTSIC), are a transit peptide targeting the peroxisome. The active-site Acyl-thioester intermediate is the Cys138. Catalysis depends on proton acceptor residues His393 and Cys425. Residue Gly427 coordinates substrate.

The protein belongs to the thiolase-like superfamily. Thiolase family. Homodimer.

Its subcellular location is the peroxisome. It carries out the reaction an acyl-CoA + acetyl-CoA = a 3-oxoacyl-CoA + CoA. It participates in aromatic compound metabolism. It functions in the pathway lipid metabolism; fatty acid metabolism. Functionally, component of the floral volatile benzenoid/phenylpropanoid (FVBP) biosynthetic pathway. Thiolase that catalyzes the conversion of 3-oxo-3-phenylpropionyl-CoA (benzoylacetyl-CoA) to benzoyl-CoA. This is 3-ketoacyl CoA thiolase 1, peroxisomal from Petunia hybrida (Petunia).